Consider the following 409-residue polypeptide: Argininosuccinate synthase (409 aa).

ATP contacts are provided by residues 8–16 (AYSGGLDTS) and A34. Y85 serves as a coordination point for L-citrulline. Residue G115 coordinates ATP. T117, N121, and D122 together coordinate L-aspartate. N121 is a binding site for L-citrulline. L-citrulline contacts are provided by R125, S178, S187, E268, and Y280.

This sequence belongs to the argininosuccinate synthase family. Type 1 subfamily. As to quaternary structure, homotetramer.

Its subcellular location is the cytoplasm. The catalysed reaction is L-citrulline + L-aspartate + ATP = 2-(N(omega)-L-arginino)succinate + AMP + diphosphate + H(+). It participates in amino-acid biosynthesis; L-arginine biosynthesis; L-arginine from L-ornithine and carbamoyl phosphate: step 2/3. The chain is Argininosuccinate synthase from Thermotoga maritima (strain ATCC 43589 / DSM 3109 / JCM 10099 / NBRC 100826 / MSB8).